A 456-amino-acid chain; its full sequence is Adenylosuccinate lyase (456 aa).

N(6)-(1,2-dicarboxyethyl)-AMP contacts are provided by residues 15 to 16 (RY), 90 to 92 (NHD), and 122 to 123 (TS). H171 serves as the catalytic Proton donor/acceptor. Q247 is a binding site for N(6)-(1,2-dicarboxyethyl)-AMP. S295 acts as the Proton donor/acceptor in catalysis. N(6)-(1,2-dicarboxyethyl)-AMP contacts are provided by residues S296, 301–303 (KVN), N309, R335, and 340–344 (STVLR).

The protein belongs to the lyase 1 family. Adenylosuccinate lyase subfamily. Homotetramer. Residues from neighboring subunits contribute catalytic and substrate-binding residues to each active site.

It catalyses the reaction N(6)-(1,2-dicarboxyethyl)-AMP = fumarate + AMP. The enzyme catalyses (2S)-2-[5-amino-1-(5-phospho-beta-D-ribosyl)imidazole-4-carboxamido]succinate = 5-amino-1-(5-phospho-beta-D-ribosyl)imidazole-4-carboxamide + fumarate. The protein operates within purine metabolism; AMP biosynthesis via de novo pathway; AMP from IMP: step 2/2. Its pathway is purine metabolism; IMP biosynthesis via de novo pathway; 5-amino-1-(5-phospho-D-ribosyl)imidazole-4-carboxamide from 5-amino-1-(5-phospho-D-ribosyl)imidazole-4-carboxylate: step 2/2. In terms of biological role, catalyzes two reactions in de novo purine nucleotide biosynthesis. Catalyzes the breakdown of 5-aminoimidazole- (N-succinylocarboxamide) ribotide (SAICAR or 2-[5-amino-1-(5-phospho-beta-D-ribosyl)imidazole-4-carboxamido]succinate) to 5-aminoimidazole-4-carboxamide ribotide (AICAR or 5-amino-1-(5-phospho-beta-D-ribosyl)imidazole-4-carboxamide) and fumarate, and of adenylosuccinate (ADS or N(6)-(1,2-dicarboxyethyl)-AMP) to adenosine monophosphate (AMP) and fumarate. In Legionella pneumophila (strain Corby), this protein is Adenylosuccinate lyase (purB).